An 876-amino-acid polypeptide reads, in one-letter code: Alanine--tRNA ligase (876 aa).

His-564, His-568, Cys-666, and His-670 together coordinate Zn(2+).

It belongs to the class-II aminoacyl-tRNA synthetase family. In terms of assembly, homotetramer. It depends on Zn(2+) as a cofactor.

Its subcellular location is the cytoplasm. It catalyses the reaction tRNA(Ala) + L-alanine + ATP = L-alanyl-tRNA(Ala) + AMP + diphosphate. Functionally, catalyzes the attachment of alanine to tRNA(Ala) in a two-step reaction: alanine is first activated by ATP to form Ala-AMP and then transferred to the acceptor end of tRNA(Ala). Also edits incorrectly charged Ser-tRNA(Ala) and Gly-tRNA(Ala) via its editing domain. In Salmonella paratyphi B (strain ATCC BAA-1250 / SPB7), this protein is Alanine--tRNA ligase.